Consider the following 121-residue polypeptide: Neuropeptide-like protein 7 (121 aa).

An N-terminal signal peptide occupies residues 1-22 (MYIKAALLIVVLFGVASQITSA).

In terms of biological role, may regulate lifespan in response to food availability and oxidative stress. The polypeptide is Neuropeptide-like protein 7 (Caenorhabditis elegans).